Consider the following 234-residue polypeptide: Ribose-5-phosphate isomerase A (234 aa).

Substrate contacts are provided by residues 39-42 (TGST), 92-95 (DGAD), and 105-108 (KGGG). E114 functions as the Proton acceptor in the catalytic mechanism. K132 provides a ligand contact to substrate.

This sequence belongs to the ribose 5-phosphate isomerase family. As to quaternary structure, homodimer.

It catalyses the reaction aldehydo-D-ribose 5-phosphate = D-ribulose 5-phosphate. Its pathway is carbohydrate degradation; pentose phosphate pathway; D-ribose 5-phosphate from D-ribulose 5-phosphate (non-oxidative stage): step 1/1. In terms of biological role, catalyzes the reversible conversion of ribose-5-phosphate to ribulose 5-phosphate. This is Ribose-5-phosphate isomerase A from Albidiferax ferrireducens (strain ATCC BAA-621 / DSM 15236 / T118) (Rhodoferax ferrireducens).